The primary structure comprises 308 residues: Testis-specific Y-encoded protein 3 (308 aa).

This sequence belongs to the nucleosome assembly protein (NAP) family.

The protein localises to the cytoplasm. Its subcellular location is the nucleus. In terms of biological role, may be involved in sperm differentiation and proliferation. The sequence is that of Testis-specific Y-encoded protein 3 (TSPY3) from Homo sapiens (Human).